A 110-amino-acid chain; its full sequence is Putative protein RIG (110 aa).

As to expression, expressed predominantly in brain and weakly in heart and lung. Expression is reduced or undetectable in cultured glioma cells, primary glioblastoma cells and malignant glioblastoma tumors.

May serve as a molecular marker for or play a role in the malignant progression of glioblastomas. In Homo sapiens (Human), this protein is Putative protein RIG (RIG).